Reading from the N-terminus, the 169-residue chain is Keratin-associated protein 9-7 (169 aa).

Repeat copies occupy residues 8-12, 13-17, 32-36, 37-41, 46-50, 51-55, 56-60, 61-65, 75-79, 80-84, 85-89, 90-94, 100-104, 139-143, 144-148, 149-153, and 163-167. Residues 8–167 are 17 X 5 AA repeats of C-C-[VGSREQH]-[SQTPN]-[STPAI]; the sequence is CCQPTCCRTT…TCVTSCCQPA (160 aa).

It belongs to the KRTAP type 9 family. Interacts with hair keratins.

In the hair cortex, hair keratin intermediate filaments are embedded in an interfilamentous matrix, consisting of hair keratin-associated proteins (KRTAP), which are essential for the formation of a rigid and resistant hair shaft through their extensive disulfide bond cross-linking with abundant cysteine residues of hair keratins. The matrix proteins include the high-sulfur and high-glycine-tyrosine keratins. In Homo sapiens (Human), this protein is Keratin-associated protein 9-7.